Reading from the N-terminus, the 481-residue chain is Proline--tRNA ligase (481 aa).

The protein belongs to the class-II aminoacyl-tRNA synthetase family. ProS type 3 subfamily. Homodimer.

The protein resides in the cytoplasm. The enzyme catalyses tRNA(Pro) + L-proline + ATP = L-prolyl-tRNA(Pro) + AMP + diphosphate. In terms of biological role, catalyzes the attachment of proline to tRNA(Pro) in a two-step reaction: proline is first activated by ATP to form Pro-AMP and then transferred to the acceptor end of tRNA(Pro). The protein is Proline--tRNA ligase of Saccharolobus islandicus (strain M.16.27) (Sulfolobus islandicus).